The chain runs to 231 residues: Eukaryotic translation initiation factor 4E-1 (231 aa).

Positions 1 to 55 (MVVEDTQKSSITDDQITANPNNENEDLEEGEILDDDDSSATSRPPSSSGALARNP) are disordered. Residues 8-18 (KSSITDDQITA) are compositionally biased toward polar residues. The segment covering 23-38 (ENEDLEEGEILDDDDS) has biased composition (acidic residues). Positions 39 to 48 (SATSRPPSSS) are enriched in low complexity. EIF4G-binding stretches follow at residues 56 to 59 (HPLE) and 66 to 102 (FDNP…NNIH). Residues 74-79 (KQAAWG), Lys106, and 124-125 (WE) contribute to the mRNA site. The cysteines at positions 129 and 167 are disulfide-linked. The interval 150-159 (YTLLGMIGEQ) is EIF4G-binding. MRNA-binding positions include 174–179 (RNRQEK) and 219–223 (KKHDR).

It belongs to the eukaryotic initiation factor 4E family. In terms of assembly, EIF4F is a multi-subunit complex, the composition of which varies with external and internal environmental conditions. It is composed of at least EIF4A, EIF4E and EIF4G. EIF4E is also known to interact with other partners. In higher plants two isoforms of EIF4F have been identified, named isoform EIF4F and isoform EIF(iso)4F. Isoform EIF4F has subunits p220 and p26, whereas isoform EIF(iso)4F has subunits p82 and p28. (Microbial infection) Interacts with potyvirus peanut stripe virus (PStV) helper component proteinase (HC-Pro) in the cytoplasm and with PStV viral genome-linked protein (VPg) in the nucleus; these interactions are possible in susceptible hosts but impaired in resistant plants. In terms of processing, according to the redox status, the Cys-129-Cys-167 disulfide bridge may have a role in regulating protein function by affecting its ability to bind capped mRNA. Expressed ubiquitously with highest levels in young leaves and roots, and lowest levels in flowers.

It localises to the nucleus. Its subcellular location is the cytoplasm. In terms of biological role, component of the protein complex eIF4F, which is involved in the recognition of the mRNA cap, ATP-dependent unwinding of 5'-terminal secondary structure and recruitment of mRNA to the ribosome. Recognizes and binds the 7-methylguanosine-containing mRNA cap during an early step in the initiation of protein synthesis and facilitates ribosome binding by inducing the unwinding of the mRNAs secondary structures. Key component of recessive resistance to potyviruses such as peanut stripe virus (PStV). Functionally, (Microbial infection) Susceptibility host factor required for viral infection by recruiting viral RNAs to the host ribosomal complex via an interaction with viral genome-linked protein (VPg). The sequence is that of Eukaryotic translation initiation factor 4E-1 from Arachis hypogaea (Peanut).